We begin with the raw amino-acid sequence, 202 residues long: Small ribosomal subunit protein uS4 (202 aa).

The interval 16–42 (GELPGLSRKNPRRAYPPGQHGQARKKR) is disordered. Residues 90-151 (MRLDNTVFRL…QERSRRLVEA (62 aa)) form the S4 RNA-binding domain.

This sequence belongs to the universal ribosomal protein uS4 family. Part of the 30S ribosomal subunit. Contacts protein S5. The interaction surface between S4 and S5 is involved in control of translational fidelity.

Its function is as follows. One of the primary rRNA binding proteins, it binds directly to 16S rRNA where it nucleates assembly of the body of the 30S subunit. In terms of biological role, with S5 and S12 plays an important role in translational accuracy. In Rippkaea orientalis (strain PCC 8801 / RF-1) (Cyanothece sp. (strain PCC 8801)), this protein is Small ribosomal subunit protein uS4.